Consider the following 421-residue polypeptide: Ethanolamine-phosphate cytidylyltransferase (421 aa).

Residues 8–28 (IVGSCIVGGAAFAVGASFLHL) form a helical membrane-spanning segment. The tract at residues 203 to 227 (SRSSLQRQFSHGHSSPKFEDGASSA) is disordered. The span at 204-215 (RSSLQRQFSHGH) shows a compositional bias: polar residues. CTP is bound by residues 262–263 (AF), 270–273 (HVEI), Arg298, 346–349 (HGTV), and 377–381 (SPLDI). The tract at residues 402–421 (AKKEASEKKYYEQKSFVSGD) is disordered. Basic and acidic residues predominate over residues 403–413 (KKEASEKKYYE). The residue at position 416 (Ser416) is a Phosphoserine.

This sequence belongs to the cytidylyltransferase family. As to expression, expressed in root tip, lateral root primordia, leaves, shoot apex, stem vascular bundles, pollen and embryos.

It is found in the mitochondrion outer membrane. The catalysed reaction is phosphoethanolamine + CTP + H(+) = CDP-ethanolamine + diphosphate. It functions in the pathway phospholipid metabolism; phosphatidylethanolamine biosynthesis; phosphatidylethanolamine from ethanolamine: step 2/3. Its function is as follows. Plays an important role in the biosynthesis of the phospholipid phosphatidylethanolamine. Catalyzes the formation of CDP-ethanolamine. Essential for early embryonic development. The protein is Ethanolamine-phosphate cytidylyltransferase of Arabidopsis thaliana (Mouse-ear cress).